We begin with the raw amino-acid sequence, 227 residues long: Sperm-associated antigen 7 (227 aa).

Residues 1–45 are disordered; sequence MADLLGSILSSMEKPPSLGDQESRRKAREQAARLKKLQEQDKQQK. At A2 the chain carries N-acetylalanine. A compositionally biased stretch (basic and acidic residues) spans 21–45; the sequence is QESRRKAREQAARLKKLQEQDKQQK. The Nuclear localization signal motif lies at 35–51; it reads KKLQEQDKQQKVEFRKR. The R3H domain occupies 46–109; that stretch reads VEFRKRMEKE…DCRYVMIFKK (64 aa). At S114 the chain carries Phosphoserine. Positions 118-161 are disordered; the sequence is LDSYRHGEEWDPQKAEEKRKLKELAQKQEEEAAQQGPAVVSPAS. A compositionally biased stretch (basic and acidic residues) spans 119–147; sequence DSYRHGEEWDPQKAEEKRKLKELAQKQEE. A Nuclear localization signal motif is present at residues 122 to 139; that stretch reads RHGEEWDPQKAEEKRKLK. Phosphoserine is present on residues S158 and S202.

It localises to the nucleus. The protein is Sperm-associated antigen 7 (Spag7) of Mus musculus (Mouse).